The sequence spans 125 residues: Ribosome-binding factor A (125 aa).

Belongs to the RbfA family. Monomer. Binds 30S ribosomal subunits, but not 50S ribosomal subunits or 70S ribosomes.

The protein localises to the cytoplasm. One of several proteins that assist in the late maturation steps of the functional core of the 30S ribosomal subunit. Associates with free 30S ribosomal subunits (but not with 30S subunits that are part of 70S ribosomes or polysomes). Required for efficient processing of 16S rRNA. May interact with the 5'-terminal helix region of 16S rRNA. The chain is Ribosome-binding factor A from Akkermansia muciniphila (strain ATCC BAA-835 / DSM 22959 / JCM 33894 / BCRC 81048 / CCUG 64013 / CIP 107961 / Muc).